The primary structure comprises 305 residues: Large ribosomal subunit protein uL10 (305 aa).

This sequence belongs to the universal ribosomal protein uL10 family. P0 forms a pentameric complex by interaction with dimers of P1 and P2. In terms of processing, phosphorylated.

Its function is as follows. Ribosomal protein P0 is the functional equivalent of E.coli protein L10. The protein is Large ribosomal subunit protein uL10 (rplp0) of Dictyostelium discoideum (Social amoeba).